A 59-amino-acid polypeptide reads, in one-letter code: Antitoxin RelB4 (59 aa).

Positions 38 to 59 are disordered; sequence VGEWLKTLGTPHQTPPPYSWRK. Residues 50 to 59 are compositionally biased toward pro residues; that stretch reads QTPPPYSWRK.

Antitoxin component of a type II toxin-antitoxin (TA) system. Neutralizes the effect of cognate toxin RelE4, but no other RelE or ParE toxin. This chain is Antitoxin RelB4 (relB4), found in Caulobacter vibrioides (strain ATCC 19089 / CIP 103742 / CB 15) (Caulobacter crescentus).